Consider the following 432-residue polypeptide: 5'-deoxyadenosine deaminase (432 aa).

Zn(2+) is bound by residues histidine 63 and histidine 65. Substrate is bound by residues glutamate 92 and histidine 184. Histidine 211 is a Zn(2+) binding site. 2 residues coordinate substrate: glutamate 214 and aspartate 299. Position 299 (aspartate 299) interacts with Zn(2+).

Belongs to the metallo-dependent hydrolases superfamily. MTA/SAH deaminase family. Homotetramer. Zn(2+) serves as cofactor.

It catalyses the reaction 5'-deoxyadenosine + H2O + H(+) = 5'-deoxyinosine + NH4(+). It carries out the reaction S-adenosyl-L-homocysteine + H2O + H(+) = S-inosyl-L-homocysteine + NH4(+). The catalysed reaction is S-methyl-5'-thioadenosine + H2O + H(+) = S-methyl-5'-thioinosine + NH4(+). The enzyme catalyses adenosine + H2O + H(+) = inosine + NH4(+). The protein operates within amino-acid biosynthesis; S-adenosyl-L-methionine biosynthesis. In terms of biological role, catalyzes the deamination of three SAM-derived enzymatic products, namely 5'-deoxyadenosine, S-adenosyl-L-homocysteine, and 5'-methylthioadenosine, to produce the inosine analogs. Can also deaminate adenosine. The preferred substrate for this enzyme is 5'-deoxyadenosine, but all these substrates are efficiently deaminated. Likely functions in a S-adenosyl-L-methionine (SAM) recycling pathway from S-adenosyl-L-homocysteine (SAH) produced from SAM-dependent methylation reactions. May also be involved in the recycling of 5'-deoxyadenosine, whereupon the 5'-deoxyribose moiety of 5'-deoxyinosine is further metabolized to deoxyhexoses used for the biosynthesis of aromatic amino acids in methanogens. In Methanosarcina acetivorans (strain ATCC 35395 / DSM 2834 / JCM 12185 / C2A), this protein is 5'-deoxyadenosine deaminase.